The primary structure comprises 304 residues: Protein BOBBER 1 (304 aa).

N-acetylalanine is present on A2. A coiled-coil region spans residues 54 to 106 (EDEIVVAVRAAKEKLKKAEKKKAEKESVKPVEKKAEKEIVKLVEKKVEKESVK). A disordered region spans residues 111 to 141 (ASSAEPIEVEKPKEEEEKKESGPIVPNKGNG). The span at 118 to 131 (EVEKPKEEEEKKES) shows a compositional bias: basic and acidic residues. In terms of domain architecture, CS spans 142-231 (TDLENYSWIQ…DQMEWWKCCV (90 aa)).

In terms of tissue distribution, expressed in all seedling tissues with highest expression levels at the root tip.

Its subcellular location is the cytoplasm. The protein localises to the cytoplasmic granule. In terms of biological role, small heat shock protein required for the establishment of auxin gradients and for patterning of the apical domain of the embryo. Involved in the specification of the cotyledon primordia. Also required for normal inflorescence and floral meristem function, normal developmental patterning and thermotolerance. Acts as a molecular chaperone. In Arabidopsis thaliana (Mouse-ear cress), this protein is Protein BOBBER 1 (BOB1).